The following is a 706-amino-acid chain: Probable cyclic nucleotide-gated ion channel 3 (706 aa).

Topologically, residues 1–85 (MMNPQRNKFV…NDSYLQSWNK (85 aa)) are cytoplasmic. A helical membrane pass occupies residues 86-106 (IFLLLSVVALAFDPLFFYIPY). At 107–119 (VKPERFCLNLDKK) the chain is on the extracellular side. A helical membrane pass occupies residues 120–140 (LQTIACVFRTFIDAFYVVHML). The Cytoplasmic portion of the chain corresponds to 141-174 (FQFHTGFITPSSSGFGRGELNEKHKDIALRYLGS). The helical transmembrane segment at 175–195 (YFLIDLLSILPIPQVVVLAIV) threads the bilayer. Residues 196 to 208 (PRMRRPASLVAKE) lie on the Extracellular side of the membrane. The helical transmembrane segment at 209–229 (LLKWVIFCQYVPRIARIYPLF) threads the bilayer. Residues 230–247 (KEVTRTSGLVTETAWAGA) lie on the Cytoplasmic side of the membrane. The chain crosses the membrane as a helical span at residues 248–268 (ALNLFLYMLASHVFGSFWYLI). Residues 269–371 (SIERKDRCWR…QNLKTSAFEG (103 aa)) lie on the Extracellular side of the membrane. The helical transmembrane segment at 372 to 392 (EIIFAIVICISGLVLFALLIG) threads the bilayer. The Cytoplasmic portion of the chain corresponds to 393–706 (NMQKYLQSTT…ADPEFPMDET (314 aa)). A nucleoside 3',5'-cyclic phosphate contacts are provided by residues 477–600 (WFQA…KQLR) and aspartate 548. The interval 591–606 (YRRLHSKQLRHMFRFY) is calmodulin-binding. The region spanning 611–640 (QTWAACFIQAAWKRHCRRKLSKALREEEGK) is the IQ domain.

It belongs to the cyclic nucleotide-gated cation channel (TC 1.A.1.5) family. As to quaternary structure, homotetramer or heterotetramer.

The protein localises to the cell membrane. Functionally, probable cyclic nucleotide-gated ion channel. The polypeptide is Probable cyclic nucleotide-gated ion channel 3 (CNGC3) (Arabidopsis thaliana (Mouse-ear cress)).